We begin with the raw amino-acid sequence, 243 residues long: uncharacterized protein (243 aa).

This is an uncharacterized protein from Acidianus bottle-shaped virus (isolate Italy/Pozzuoli) (ABV).